The following is a 449-amino-acid chain: MMTVAAEIRGSNPEKLLAPVLSAFWDEDESWTLDVYRRHEGYEGLRKALAMAPDDLIAYVKESGLRGRGGAGFPTGMKWQFIPQGDGKPHYLVVNADESEPGTCKDIPLLFANPHSLIEGIVIACYAIRSSHAFIYLRGEVVPVLRRLHEAVREAYAAGFLGENILGSGLDLTLTVHAGAGAYICGEETALLDSLEGRRGQPRLRPPFPAVAGLYACPTVVNNVESIASVPAILNKGKDWFRSMGSEKSPGFTLYSLSGHVAGPGQYEAPLGITLRQLLDMSGGMRPGHRLKFWTPGGSSTPMFTDEHLDVPLDYEGVGAAGSMLGTKALQCFDETTCVVRAVTRWTEFYAHESCGKCTPCREGTYWLVQLLRDIEAGKGQMSDLDKLNDIADNINGKSFCALGDGAASPIFSSLKYFREEYEEHITGRGCPFDPAKSTAWADRTEVKA.

67-76 (GRGGAGFPTG) is a binding site for NAD(+). FMN is bound at residue 179–226 (GAGAYICGEETALLDSLEGRRGQPRLRPPFPAVAGLYACPTVVNNVES). Residues Cys355, Cys358, Cys361, and Cys401 each coordinate [4Fe-4S] cluster.

The protein belongs to the complex I 51 kDa subunit family. Requires FMN as cofactor. It depends on [4Fe-4S] cluster as a cofactor.

It catalyses the reaction a quinone + NADH + 5 H(+)(in) = a quinol + NAD(+) + 4 H(+)(out). In terms of biological role, NDH-1 shuttles electrons from NADH, via FMN and iron-sulfur (Fe-S) centers, to quinones in the respiratory chain. Couples the redox reaction to proton translocation (for every two electrons transferred, four hydrogen ions are translocated across the cytoplasmic membrane), and thus conserves the redox energy in a proton gradient. The protein is NADH-quinone oxidoreductase subunit F (nuoF) of Streptomyces coelicolor (strain ATCC BAA-471 / A3(2) / M145).